Consider the following 300-residue polypeptide: uncharacterized protein (300 aa).

CBS domains follow at residues 10 to 68 (RFPP…FRDV), 88 to 148 (FLKY…HVKV), 152 to 207 (MTSE…EDVL), and 226 to 284 (ISSK…GVEI).

This is an uncharacterized protein from Thermofilum pendens.